Consider the following 465-residue polypeptide: Kynurenine 3-monooxygenase (465 aa).

Residues 1–26 (MSPGIVSQEVNGRQEPTEAARDERHG) form a disordered region. Basic and acidic residues predominate over residues 15–25 (EPTEAARDERH). Transmembrane regions (helical) follow at residues 405-427 (LLFRLFPGWIPLYNSVSFSSMPY) and 440-462 (LLKRIFGATFLAAIVTGGAIYAQ).

It belongs to the aromatic-ring hydroxylase family. KMO subfamily. It depends on FAD as a cofactor.

The protein resides in the mitochondrion. Its subcellular location is the membrane. The enzyme catalyses L-kynurenine + NADPH + O2 + H(+) = 3-hydroxy-L-kynurenine + NADP(+) + H2O. The protein operates within cofactor biosynthesis; NAD(+) biosynthesis; quinolinate from L-kynurenine: step 1/3. In terms of biological role, catalyzes the hydroxylation of L-kynurenine (L-Kyn) to form 3-hydroxy-L-kynurenine (L-3OHKyn). Required for synthesis of quinolinic acid. The chain is Kynurenine 3-monooxygenase from Drosophila melanogaster (Fruit fly).